The sequence spans 423 residues: AP-1 complex subunit mu-2 (423 aa).

The MHD domain occupies 168–421; that stretch reads KNEVFIDVIE…ITQSGDYQLR (254 aa).

The protein belongs to the adaptor complexes medium subunit family. In terms of assembly, adaptor protein complex 1 (AP-1) is a heterotetramer composed of two large adaptins (gamma-type subunit AP1G1 and beta-type subunit AP1B1), a medium adaptin (mu-type subunit AP1M1 or AP1M2) and a small adaptin (sigma-type subunit AP1S1 or AP1S2 or AP1S3). Interacts with P2X4. In terms of processing, phosphorylation of membrane-bound AP1M1/AP1M2 increases its affinity for sorting signals.

It localises to the golgi apparatus. The protein resides in the cytoplasmic vesicle. Its subcellular location is the clathrin-coated vesicle membrane. Subunit of clathrin-associated adaptor protein complex 1 that plays a role in protein sorting in the trans-Golgi network (TGN) and endosomes. The AP complexes mediate the recruitment of clathrin to membranes and the recognition of sorting signals within the cytosolic tails of transmembrane cargo molecules. This chain is AP-1 complex subunit mu-2 (Ap1m2), found in Rattus norvegicus (Rat).